An 893-amino-acid chain; its full sequence is Probable disease resistance protein At1g62630 (893 aa).

Residues 24-68 (GSYTHNLEKNLVALETTMEELKAKRDDLLRRLKREEDRGLQRLSE) adopt a coiled-coil conformation. In terms of domain architecture, NB-ARC spans 136-440 (TEQASTSAFE…CEEIIDGSEG (305 aa)). 179–186 (GMGGVGKT) provides a ligand contact to ATP. 6 LRR repeats span residues 516-537 (VVRRMSLMGNKIHHLVGSYECM), 538-559 (ELTTLLLGEGEYGSIWRWSEIK), 571-593 (KLAVLDLSHNQSLFELPEEISNL), 595-617 (SLKYLNLSHTGIRHLSKGIQELK), 618-640 (KIIHLNLEHTSKLESIDGISSLH), and 641-663 (NLKVLKLYGSRLPWDLNTVKELE).

It belongs to the disease resistance NB-LRR family.

Probable disease resistance protein. The chain is Probable disease resistance protein At1g62630 from Arabidopsis thaliana (Mouse-ear cress).